Consider the following 220-residue polypeptide: UPF0319 protein YccT (220 aa).

A signal peptide spans 1 to 20 (MKTGALATFLALCLPVTVFA).

Belongs to the UPF0319 family.

The polypeptide is UPF0319 protein YccT (Salmonella agona (strain SL483)).